A 153-amino-acid polypeptide reads, in one-letter code: uncharacterized protein (153 aa).

The N-terminal stretch at methionine 1–alanine 19 is a signal peptide. Active-site residues include arginine 46, glutamate 54, and arginine 88.

Belongs to the thermonuclease family.

This is an uncharacterized protein from Escherichia coli O157:H7.